An 83-amino-acid polypeptide reads, in one-letter code: Sec-independent protein translocase protein TatA (83 aa).

The chain crosses the membrane as a helical span at residues 2 to 22; sequence GLGGISIWQLLIVLVIVLLLF. 2 stretches are compositionally biased toward basic and acidic residues: residues 50 to 65 and 74 to 83; these read AAKQ…KVAA and AEQKEKTEAK. Residues 50–83 are disordered; it reads AAKQEAEEAEQKKVAAEEAAAAKTAEQKEKTEAK.

It belongs to the TatA/E family. In terms of assembly, the Tat system comprises two distinct complexes: a TatABC complex, containing multiple copies of TatA, TatB and TatC subunits, and a separate TatA complex, containing only TatA subunits. Substrates initially bind to the TatABC complex, which probably triggers association of the separate TatA complex to form the active translocon.

The protein resides in the cell inner membrane. Its function is as follows. Part of the twin-arginine translocation (Tat) system that transports large folded proteins containing a characteristic twin-arginine motif in their signal peptide across membranes. TatA could form the protein-conducting channel of the Tat system. In Saccharophagus degradans (strain 2-40 / ATCC 43961 / DSM 17024), this protein is Sec-independent protein translocase protein TatA.